Reading from the N-terminus, the 368-residue chain is Mitogen-activated protein kinase HOG1B (368 aa).

The Protein kinase domain maps to 20–299; the sequence is YVNLEPVGMG…ASQALAHPYL (280 aa). Residues 26-34 and Lys49 each bind ATP; that span reads VGMGAFGLV. The active-site Proton acceptor is the Asp141. A Phosphothreonine modification is found at Thr171. The short motif at 171–173 is the TXY element; the sequence is TGY. Position 173 is a phosphotyrosine (Tyr173).

Belongs to the protein kinase superfamily. Ser/Thr protein kinase family. MAP kinase subfamily. HOG1 sub-subfamily. It depends on Mg(2+) as a cofactor. In terms of processing, phosphorylated. Dually phosphorylated on Thr-171 and Tyr-173, which activates the enzyme. Rapidly dephosphorylated upon either hypo- or hyperosmotic shock.

It localises to the cytoplasm. Its subcellular location is the nucleus. The catalysed reaction is L-seryl-[protein] + ATP = O-phospho-L-seryl-[protein] + ADP + H(+). It catalyses the reaction L-threonyl-[protein] + ATP = O-phospho-L-threonyl-[protein] + ADP + H(+). With respect to regulation, activated by tyrosine and threonine phosphorylation. In terms of biological role, mitogen-activated protein kinase involved in a signal transduction pathway that is activated by changes in the osmolarity of the extracellular environment. Controls osmotic regulation of transcription of target genes. The protein is Mitogen-activated protein kinase HOG1B (HOG1B) of Wallemia ichthyophaga (strain EXF-994 / CBS 113033).